Reading from the N-terminus, the 1194-residue chain is Chitin synthase C (1194 aa).

Disordered stretches follow at residues 1–91 (MSLP…PNYL) and 136–177 (GAHG…RRKA). A compositionally biased stretch (basic and acidic residues) spans 12-23 (PRREETSAFREP). A compositionally biased stretch (basic residues) spans 42 to 54 (PRHHRHHRSHSSR). Composition is skewed to basic and acidic residues over residues 55-69 (HQHD…EGGI) and 76-85 (VKPERGRMDP). Basic residues predominate over residues 150–164 (TRHRSKKRKGSRKIS). The helical transmembrane segment at 221–241 (IGLISIILMIAAFVGFLTFGF) threads the bilayer. N351 and N390 each carry an N-linked (GlcNAc...) asparagine glycan. The helical transmembrane segment at 476 to 496 (YVSLIFILSIVIVKFAFALLF) threads the bilayer. Residues N582, N608, N885, and N1014 are each glycosylated (N-linked (GlcNAc...) asparagine). 3 consecutive transmembrane segments (helical) span residues 1039-1059 (FVIF…SFTI), 1073-1093 (IIPL…VVVT), and 1097-1117 (LVYV…NFVL).

Belongs to the chitin synthase family. Class V subfamily.

The protein localises to the cell membrane. It catalyses the reaction [(1-&gt;4)-N-acetyl-beta-D-glucosaminyl](n) + UDP-N-acetyl-alpha-D-glucosamine = [(1-&gt;4)-N-acetyl-beta-D-glucosaminyl](n+1) + UDP + H(+). Its function is as follows. Polymerizes chitin, a structural polymer of the cell wall and septum, by transferring the sugar moiety of UDP-GlcNAc to the non-reducing end of the growing chitin polymer. Responsible for synthesis of 30-40% of the chitin in the cells. ChsA and chsD play redundant functions in conidia formation. The chitin synthesized by the chsD-encoded isozyme contributes to the rigidity of the walls of germinating conidia, of the subapical region of hyphae, and of conidiophore vesicles, but is not necessary for normal morphology of these cells. This chain is Chitin synthase C, found in Emericella nidulans (strain FGSC A4 / ATCC 38163 / CBS 112.46 / NRRL 194 / M139) (Aspergillus nidulans).